The primary structure comprises 43 residues: Lanthionine-containing peptide SapB (43 aa).

The signal sequence occupies residues 1 to 21 (MALLDLQAMDTPAEDSFGELA). 2 consecutive cross-links (lanthionine (Ser-Cys)) follow at residues 24–31 (SQVSLLVC) and 34–41 (SSLSVVLC). 2,3-didehydroalanine (Ser) is present on residues Ser27 and Ser37.

The protein belongs to the lanthionine-containing morphogen protein family. In terms of processing, maturation involves the enzymatic conversion of Ser into dehydrated AA and the formation of thioether bonds with cysteine. This is followed by membrane translocation and cleavage of the modified precursor.

Its function is as follows. Lanthionine-containing peptide devoid of antibiotic properties, involved in the formation of aerial mycelium. Suggested to self-assemble at air-water interfaces, thus providing a film of surfactant through which nascent aerial hyphae can emerge. The aerial hyphae differentiate further into spores. This chain is Lanthionine-containing peptide SapB (ramS), found in Streptomyces griseus subsp. griseus (strain JCM 4626 / CBS 651.72 / NBRC 13350 / KCC S-0626 / ISP 5235).